The sequence spans 258 residues: Tryptophan synthase alpha chain (258 aa).

Residues Glu50 and Asp61 each act as proton acceptor in the active site.

Belongs to the TrpA family. Tetramer of two alpha and two beta chains.

The catalysed reaction is (1S,2R)-1-C-(indol-3-yl)glycerol 3-phosphate + L-serine = D-glyceraldehyde 3-phosphate + L-tryptophan + H2O. Its pathway is amino-acid biosynthesis; L-tryptophan biosynthesis; L-tryptophan from chorismate: step 5/5. The alpha subunit is responsible for the aldol cleavage of indoleglycerol phosphate to indole and glyceraldehyde 3-phosphate. The sequence is that of Tryptophan synthase alpha chain from Clostridium beijerinckii (strain ATCC 51743 / NCIMB 8052) (Clostridium acetobutylicum).